Consider the following 486-residue polypeptide: Siroheme synthase (486 aa).

The tract at residues 1-204 (MNYLPIFVDL…HQIEQAEALV (204 aa)) is precorrin-2 dehydrogenase /sirohydrochlorin ferrochelatase. NAD(+) contacts are provided by residues 22–23 (HI) and 43–44 (EK). Ser-128 is subject to Phosphoserine. Positions 216–486 (GEVSLVGAGP…NKETHWKQAA (271 aa)) are uroporphyrinogen-III C-methyltransferase. Residue Pro-225 participates in S-adenosyl-L-methionine binding. Asp-248 serves as the catalytic Proton acceptor. The active-site Proton donor is the Lys-270. Residues 301 to 303 (GGD), Val-306, 331 to 332 (TA), Met-383, and Gly-412 contribute to the S-adenosyl-L-methionine site.

In the N-terminal section; belongs to the precorrin-2 dehydrogenase / sirohydrochlorin ferrochelatase family. The protein in the C-terminal section; belongs to the precorrin methyltransferase family.

It catalyses the reaction uroporphyrinogen III + 2 S-adenosyl-L-methionine = precorrin-2 + 2 S-adenosyl-L-homocysteine + H(+). It carries out the reaction precorrin-2 + NAD(+) = sirohydrochlorin + NADH + 2 H(+). The enzyme catalyses siroheme + 2 H(+) = sirohydrochlorin + Fe(2+). It participates in cofactor biosynthesis; adenosylcobalamin biosynthesis; precorrin-2 from uroporphyrinogen III: step 1/1. It functions in the pathway cofactor biosynthesis; adenosylcobalamin biosynthesis; sirohydrochlorin from precorrin-2: step 1/1. Its pathway is porphyrin-containing compound metabolism; siroheme biosynthesis; precorrin-2 from uroporphyrinogen III: step 1/1. The protein operates within porphyrin-containing compound metabolism; siroheme biosynthesis; siroheme from sirohydrochlorin: step 1/1. It participates in porphyrin-containing compound metabolism; siroheme biosynthesis; sirohydrochlorin from precorrin-2: step 1/1. Its function is as follows. Multifunctional enzyme that catalyzes the SAM-dependent methylations of uroporphyrinogen III at position C-2 and C-7 to form precorrin-2 via precorrin-1. Then it catalyzes the NAD-dependent ring dehydrogenation of precorrin-2 to yield sirohydrochlorin. Finally, it catalyzes the ferrochelation of sirohydrochlorin to yield siroheme. The protein is Siroheme synthase of Actinobacillus pleuropneumoniae serotype 3 (strain JL03).